The following is an 801-amino-acid chain: N,N'-diacetylchitobiose phosphorylase (801 aa).

Residues Arg-333, Arg-343, Arg-349, Asp-350, Trp-490, and Asp-492 each contribute to the N-acetyl-alpha-D-glucosamine 1-phosphate site. Catalysis depends on Asp-492, which acts as the Proton donor. Residues Asp-492, Lys-636, and Glu-637 each contribute to the N-acetyl-D-glucosamine site. Glu-637, His-644, Gln-690, Thr-709, and Gly-710 together coordinate N-acetyl-alpha-D-glucosamine 1-phosphate.

This sequence belongs to the glycosyl hydrolase 94 family. In terms of assembly, homodimer.

The enzyme catalyses N,N'-diacetylchitobiose + phosphate = N-acetyl-alpha-D-glucosamine 1-phosphate + N-acetyl-D-glucosamine. Functionally, catalyzes the reversible phosphorolysis of chitobiose (N,N'-diacetylchitobiose or (GlcNAc)(2)) into N-acetyl-alpha-D-glucosamine 1-phosphate (GlcNAc-1-P) and N-acetyl-D-glucosamine (GlcNAc) with inversion of the anomeric configuration. In the synthetic reaction, is also active on glucose-1-phosphate with 10% activity as compared with that on GlcNAc-1-P. GlcNAc is the best acceptor substrate, but the enzyme can use aryl-beta-glycosides of GlcNAc as the acceptor substrate with 10-20% activities of GlcNAc. Shows no phosphorolytic activity on cellobiose. The polypeptide is N,N'-diacetylchitobiose phosphorylase (Vibrio proteolyticus (Aeromonas proteolytica)).